We begin with the raw amino-acid sequence, 103 residues long: Histone H4.1 (103 aa).

Residues 1 to 14 are compositionally biased toward gly residues; it reads MSGRGKGGKGLGKG. The disordered stretch occupies residues 1–20; it reads MSGRGKGGKGLGKGGAKRHR. Position 6 is an N6-acetyl-N6-methyllysine; alternate (Lys-6). N6-methyllysine; alternate is present on residues Lys-6, Lys-9, and Lys-13. Lys-13 carries the post-translational modification N6-acetyl-N6-methyllysine; alternate. Residues 17–21 mediate DNA binding; the sequence is KRHRK. Lys-92 is subject to N6-glutaryllysine.

This sequence belongs to the histone H4 family. In terms of assembly, the nucleosome is a histone octamer containing two molecules each of H2A, H2B, H3 and H4 assembled in one H3-H4 heterotetramer and two H2A-H2B heterodimers. The octamer wraps approximately 147 bp of DNA. Glutarylation at Lys-92 (H4K91glu) destabilizes nucleosomes by promoting dissociation of the H2A-H2B dimers from nucleosomes.

It is found in the nucleus. The protein localises to the chromosome. Core component of nucleosome. Nucleosomes wrap and compact DNA into chromatin, limiting DNA accessibility to the cellular machineries which require DNA as a template. Histones thereby play a central role in transcription regulation, DNA repair, DNA replication and chromosomal stability. DNA accessibility is regulated via a complex set of post-translational modifications of histones, also called histone code, and nucleosome remodeling. The protein is Histone H4.1 (hhfA) of Emericella nidulans (strain FGSC A4 / ATCC 38163 / CBS 112.46 / NRRL 194 / M139) (Aspergillus nidulans).